The following is a 156-amino-acid chain: Small ribosomal subunit protein uS7 (156 aa).

The protein belongs to the universal ribosomal protein uS7 family. As to quaternary structure, part of the 30S ribosomal subunit. Contacts proteins S9 and S11.

Functionally, one of the primary rRNA binding proteins, it binds directly to 16S rRNA where it nucleates assembly of the head domain of the 30S subunit. Is located at the subunit interface close to the decoding center, probably blocks exit of the E-site tRNA. The sequence is that of Small ribosomal subunit protein uS7 from Streptococcus pyogenes serotype M1.